A 919-amino-acid chain; its full sequence is Calcium-activated chloride channel regulator 4 (919 aa).

The signal sequence occupies residues 1 to 21; that stretch reads MGLFRGFVFLLVLCLLHQSNT. Positions 45–199 are metalloprotease domain; the sequence is DEKIIEQIED…GISGRNRVYK (155 aa). Asn75 carries an N-linked (GlcNAc...) asparagine glycan. Position 155 (His155) interacts with Zn(2+). Glu156 is an active-site residue. Zn(2+) is bound by residues His159 and Asp166. The region spanning 306 to 476 is the VWFA domain; it reads IVCLVLDKSG…NGLIDAFGAL (171 aa). Asn340, Asn504, Asn542, Asn588, Asn628, Asn811, Asn832, Asn837, and Asn852 each carry an N-linked (GlcNAc...) asparagine glycan. The segment at 870–893 is disordered; sequence ANPDDIDPTPTPTPTPTPDKSHNS. Residues 895-915 form a helical membrane-spanning segment; the sequence is VNISTLVLSVIGSVVIVNFIL.

This sequence belongs to the CLCR family. Post-translationally, the translation product is autoproteolytically cleaved by the metalloprotease domain in the endoplasmic reticulum into a N-terminal and a C-terminal products that remain physically associated with each other. The cleavage is necessary for calcium-activated chloride channel (CaCC) activation activity. As to expression, primarily expressed in the digestive tract, mainly in colon. Detected in smaller amounts in brain, urogenital organs, testis, and salivary and mammary glands. Highly expressed in the epithelial layer and submucosal gland of the inferior turbinate mucosa. Lower levels in the epithelial layer of nasal polyp.

It is found in the cell membrane. It localises to the apical cell membrane. The protein resides in the secreted. May be involved in mediating calcium-activated chloride conductance. This chain is Calcium-activated chloride channel regulator 4 (CLCA4), found in Homo sapiens (Human).